A 604-amino-acid polypeptide reads, in one-letter code: Choline transporter-like protein 3 (604 aa).

2 N-linked (GlcNAc...) asparagine glycosylation sites follow: N90 and N103. Transmembrane regions (helical) follow at residues 165–185 (DTIL…LFTF), 195–215 (IIIS…WWLY), 237–257 (LAFA…IFTL), 286–306 (LWTF…LLSL), and 330–350 (YLWW…LTCQ). Residues N454 and N472 are each glycosylated (N-linked (GlcNAc...) asparagine). Transmembrane regions (helical) follow at residues 485–505 (FIIF…GLMA) and 514–534 (VWAI…HSFL). Residues 581–592 (NARSQGHKNSLP) are compositionally biased toward polar residues. Positions 581–604 (NARSQGHKNSLPNEEGTELRPIVR) are disordered.

It belongs to the CTL (choline transporter-like) family. As to expression, expressed in colon, kidney and ileum.

Its subcellular location is the membrane. In Rattus norvegicus (Rat), this protein is Choline transporter-like protein 3 (Slc44a3).